We begin with the raw amino-acid sequence, 421 residues long: Structure-specific endonuclease subunit SLX1 (421 aa).

A GIY-YIG domain is found at 13 to 95 (AFYCCYLLRS…QHTKESRHAE (83 aa)). Disordered regions lie at residues 34 to 57 (TPEPSRRLAQHNGDRTGGARKTSS) and 96 to 120 (VERCESEQLGTRGSSRTGKEVKRAG). The SLX1-type zinc-finger motif lies at 225-280 (CGVCKQRLNPRNDMIAICSHSLCRCASHLLCLSAHFLEAAGFIGKLIPKEGTCPAC). A compositionally biased stretch (basic residues) spans 310–322 (RRRTEQVGKRKIS). The interval 310 to 339 (RRRTEQVGKRKISNHVSSEKGESEASMPST) is disordered.

The protein belongs to the SLX1 family. As to quaternary structure, forms a heterodimer with SLX4. The cofactor is a divalent metal cation.

It localises to the nucleus. Functionally, catalytic subunit of the SLX1-SLX4 structure-specific endonuclease that resolves DNA secondary structures generated during DNA repair and recombination. Has endonuclease activity towards branched DNA substrates, introducing single-strand cuts in duplex DNA close to junctions with ss-DNA. This chain is Structure-specific endonuclease subunit SLX1, found in Ajellomyces capsulatus (strain G186AR / H82 / ATCC MYA-2454 / RMSCC 2432) (Darling's disease fungus).